Here is a 341-residue protein sequence, read N- to C-terminus: HTH-type transcriptional repressor PurR (341 aa).

The region spanning 2 to 56 is the HTH lacI-type domain; sequence ATIKDVAKRANVSTTTVSHVINKTRFVAEETRNAVWAAIKELHYSPSAVARSLKV. The H-T-H motif DNA-binding region spans 4 to 23; the sequence is IKDVAKRANVSTTTVSHVIN. Residues 48–56 mediate DNA binding; sequence SAVARSLKV. Hypoxanthine is bound by residues Tyr73, Arg190, Thr192, Phe221, and Asp275.

In terms of assembly, homodimer.

It functions in the pathway purine metabolism; purine nucleotide biosynthesis [regulation]. Functionally, is the main repressor of the genes involved in the de novo synthesis of purine nucleotides, regulating purB, purC, purEK, purF, purHD, purL, purMN and guaBA expression. PurR is allosterically activated to bind its cognate DNA by binding the purine corepressors, hypoxanthine or guanine, thereby effecting transcription repression. The sequence is that of HTH-type transcriptional repressor PurR from Escherichia coli (strain UTI89 / UPEC).